The following is a 543-amino-acid chain: MTATPARRTSLASPATKPVAGGLALAFLATLAGGALLALALEAGGGGFDAAANFDTYLWRVARFTIWQAVASSLLSVLFAIPIARALYAEARFPGRGLILRLFALPLALPALVAVLGVTSIYGRNGLIAHISDMLGHPMQPDIYGIAGILIAHIFFNMPLAVRLLLAAYESIPDDHWKLAAQLGMGSRARFRLIEWPVIRRSLPGMIGLVFMLCVTSFTTVLTLGGGPRATTLEVAIYQSLHFDFDPARAVALTFTQLALTLLILLILRLTGRPSEEGFTQTATPRRYGSPRKTERLFNIIVIALGFLYVALPIAGVVVSGLTADLVRLLSERIVWHAIATSLALGFSAALLAVFLSLALVAAREATRNARIANIFDTGASLILVMPPIVIGAGWFILLRHFTDPFVMAPLMVVTVNAAMAMPFAVRLLRPAWDTAASRHNKLCSQLGIKGFNRLRLIDWPSIRRPCGMAFAFAMALSLGDLGTIALFGSDALVTLPYLLLQRMGSYRTFDAAGLALILGVLCLALMMIADRAAASRKEAFLQ.

12 helical membrane-spanning segments follow: residues 19-39, 64-84, 102-122, 142-162, 205-225, 250-270, 300-320, 343-363, 379-399, 406-426, 468-488, and 510-530; these read VAGGLALAFLATLAGGALLAL, FTIWQAVASSLLSVLFAIPIA, LFALPLALPALVAVLGVTSIY, DIYGIAGILIAHIFFNMPLAV, GMIGLVFMLCVTSFTTVLTLG, AVALTFTQLALTLLILLILRL, IIVIALGFLYVALPIAGVVVS, LALGFSAALLAVFLSLALVAA, GASLILVMPPIVIGAGWFILL, FVMAPLMVVTVNAAMAMPFAV, GMAFAFAMALSLGDLGTIALF, and FDAAGLALILGVLCLALMMIA. An ABC transmembrane type-1 1 domain is found at 62–266; that stretch reads ARFTIWQAVA…QLALTLLILL (205 aa). Residues 339–530 enclose the ABC transmembrane type-1 2 domain; that stretch reads IATSLALGFS…VLCLALMMIA (192 aa).

The protein belongs to the binding-protein-dependent transport system permease family. CysTW subfamily. In terms of assembly, the complex is composed of two ATP-binding proteins (ThiQ), two transmembrane proteins (ThiP) and a solute-binding protein (ThiB).

Its subcellular location is the cell inner membrane. Functionally, part of the ABC transporter complex ThiBPQ involved in thiamine import. Probably responsible for the translocation of the substrate across the membrane. In Brucella abortus (strain 2308), this protein is Thiamine transport system permease protein ThiP (thiP).